A 331-amino-acid polypeptide reads, in one-letter code: MIDTSIPLVDLHRHLDGNVRVNTIWELGHQHGIALPADSLETLAPFVQIQGKETSLVAFLKKLDWMVGVLADLDAVKRVAYENVADAALSGLDYAELRFSPYYMAMNHKLPIEGVVEAVVDGVKAGLKDYNVKINLIGILSRSFGQAACTQELEGLLAHKQHLVAMDLAGDEMGFPGELFNEHFKRVRDADLAITAHAGEAAGSQSMWQAIQELGATRIGHGVNAIHDPKLMEYLAKHRIGIESCPTSNLHTSTVASYADHPFRTFMDAGVLINLNTDDPGVSAIDINHEYRIAKSELKLTDAELAQVQRNGVEMAFLSDSERKALYAAKV.

Residues H12 and H14 each coordinate Zn(2+). Residues H14, D16, and G170 each contribute to the substrate site. A Zn(2+)-binding site is contributed by H197. E200 serves as the catalytic Proton donor. D278 is a Zn(2+) binding site. D279 lines the substrate pocket.

This sequence belongs to the metallo-dependent hydrolases superfamily. Adenosine and AMP deaminases family. Adenosine deaminase subfamily. It depends on Zn(2+) as a cofactor.

It catalyses the reaction adenosine + H2O + H(+) = inosine + NH4(+). The catalysed reaction is 2'-deoxyadenosine + H2O + H(+) = 2'-deoxyinosine + NH4(+). In terms of biological role, catalyzes the hydrolytic deamination of adenosine and 2-deoxyadenosine. The polypeptide is Adenosine deaminase (Shewanella baltica (strain OS155 / ATCC BAA-1091)).